The chain runs to 365 residues: Serpentine receptor class epsilon-38 (365 aa).

A run of 7 helical transmembrane segments spans residues 26 to 46 (GMYLYLLLTEILLYVGTGVII), 65 to 85 (IMTALFLCQWFEAIAAKLLII), 124 to 144 (ALVISGFLIWHYAYTMIFGIL), 168 to 188 (IPVFLITSTHLITLTFSYFVL), 196 to 216 (LGTSPCFLNSALVVMTFLAVW), 256 to 276 (LVIVVLCAISVPCALLICLVI), and 285 to 305 (IFIHIMENFIYLNPVIICSTL).

Belongs to the nematode receptor-like protein sre family.

The protein resides in the membrane. This Caenorhabditis elegans protein is Serpentine receptor class epsilon-38 (sre-38).